A 489-amino-acid chain; its full sequence is Adenosylhomocysteinase (489 aa).

Substrate is bound by residues Thr-68, Asp-151, and Glu-213. 214–216 (TTT) contributes to the NAD(+) binding site. Residues Lys-243 and Asp-247 each contribute to the substrate site. NAD(+) is bound by residues Asn-248, 277–282 (GYGDVG), Glu-300, Asn-335, 356–358 (IGH), and Asn-403.

The protein belongs to the adenosylhomocysteinase family. NAD(+) is required as a cofactor.

It localises to the cytoplasm. It carries out the reaction S-adenosyl-L-homocysteine + H2O = L-homocysteine + adenosine. It participates in amino-acid biosynthesis; L-homocysteine biosynthesis; L-homocysteine from S-adenosyl-L-homocysteine: step 1/1. May play a key role in the regulation of the intracellular concentration of adenosylhomocysteine. This is Adenosylhomocysteinase from Mycobacterium sp. (strain KMS).